The following is a 490-amino-acid chain: Cardiolipin synthase 1 (490 aa).

The next 2 helical transmembrane spans lie at 9–29 and 42–62; these read ILTILLVVGFITNVVLAFVII and WAWLFVLFVLPVIGFILYLFL. PLD phosphodiesterase domains lie at 225-252 and 403-430; these read MNNRNHRKIIIIDGQIGYIGGFNVGDDY and QNGFIHSKILMIDDEISSIGSANMDFRS. Active-site residues include His230, Lys232, Asp237, His408, Lys410, and Asp415.

It belongs to the phospholipase D family. Cardiolipin synthase subfamily.

Its subcellular location is the cell membrane. The enzyme catalyses 2 a 1,2-diacyl-sn-glycero-3-phospho-(1'-sn-glycerol) = a cardiolipin + glycerol. Functionally, catalyzes the reversible phosphatidyl group transfer from one phosphatidylglycerol molecule to another to form cardiolipin (CL) (diphosphatidylglycerol) and glycerol. In Staphylococcus epidermidis (strain ATCC 35984 / DSM 28319 / BCRC 17069 / CCUG 31568 / BM 3577 / RP62A), this protein is Cardiolipin synthase 1 (cls1).